A 535-amino-acid polypeptide reads, in one-letter code: Sodium/hydrogen exchanger 9B2 (535 aa).

Residues Met-1–Glu-14 show a composition bias toward basic and acidic residues. Residues Met-1–Arg-70 form a disordered region. Over Met-1 to Arg-85 the chain is Cytoplasmic. 2 stretches are compositionally biased toward polar residues: residues Ser-16–Gly-34 and Thr-46–Met-58. A helical transmembrane segment spans residues Val-86 to Val-103. The Extracellular portion of the chain corresponds to Thr-104–Gly-112. The chain crosses the membrane as a helical span at residues Asn-113–Gly-132. Over Leu-133–Pro-143 the chain is Cytoplasmic. The chain crosses the membrane as a helical span at residues Pro-144–Val-160. The Extracellular segment spans residues Ile-161–Lys-170. A helical transmembrane segment spans residues Trp-171 to Gly-188. Residues Leu-189–Leu-199 are Cytoplasmic-facing. The chain crosses the membrane as a helical span at residues Lys-200–Met-226. Residues Gly-227–Trp-232 are Extracellular-facing. A helical membrane pass occupies residues Gly-233–Gly-241. Over Ala-242–Leu-269 the chain is Cytoplasmic. 4 residues coordinate Na(+): Val-243, Gly-274, Asp-277, and Asp-278. A helical membrane pass occupies residues Leu-270 to Leu-289. Residues Gly-290–Val-299 are Extracellular-facing. A helical transmembrane segment spans residues Phe-300–Ile-323. The Cytoplasmic segment spans residues Gln-324–Arg-338. The helical transmembrane segment at Ala-339–Phe-356 threads the bilayer. The Extracellular portion of the chain corresponds to Gly-357 to Gly-360. The chain crosses the membrane as a helical span at residues Ser-361–Leu-372. The Cytoplasmic portion of the chain corresponds to Ala-373–Ala-389. Residues Val-390–Thr-410 traverse the membrane as a helical segment. Topologically, residues Ala-411–Thr-416 are extracellular. A helical transmembrane segment spans residues Ile-417 to Val-439. Residues Cys-440–Ala-460 lie on the Cytoplasmic side of the membrane. The helical transmembrane segment at Thr-461–Asp-472 threads the bilayer. The Extracellular segment spans residues Thr-473–Tyr-485. Residues Gly-486 to Ile-508 form a helical membrane-spanning segment. Residues Gly-509 to Val-535 lie on the Cytoplasmic side of the membrane.

It belongs to the monovalent cation:proton antiporter 1 (CPA1) transporter (TC 2.A.36) family. In terms of assembly, homodimer; dimerization is essential for SLC9B2 activity. Lipids seem to play a role in the stabilization of the dimerization subdomain.

Its subcellular location is the cell membrane. The protein localises to the mitochondrion membrane. It is found in the endosome membrane. The protein resides in the recycling endosome membrane. It localises to the lysosome membrane. Its subcellular location is the cytoplasmic vesicle. The protein localises to the secretory vesicle. It is found in the synaptic vesicle membrane. The protein resides in the cell projection. It localises to the cilium. Its subcellular location is the flagellum membrane. The protein localises to the basolateral cell membrane. It is found in the apical cell membrane. It catalyses the reaction Li(+)(out) + H(+)(in) = Li(+)(in) + H(+)(out). The catalysed reaction is Li(+)(in) + Na(+)(out) = Li(+)(out) + Na(+)(in). The enzyme catalyses Na(+)(in) + H(+)(out) = Na(+)(out) + H(+)(in). With respect to regulation, allosterically inhibited by the N-terminal domain. Inhibited by phloretin. Its function is as follows. Electroneutral Na(+) Li(+)/H(+) antiporter that extrudes Na(+) or Li(+) in exchange for external protons across the membrane. Uses the proton gradient/membrane potential to extrude sodium. Contributes to the regulation of intracellular pH and sodium homeostasis. Also able to mediate Na(+)/Li(+) antiporter activity in kidney. May play a physiological role in renal tubular function and blood pressure homeostasis. Plays an important role for insulin secretion and clathrin-mediated endocytosis in beta-cells. Involved in sperm motility and fertility. It is controversial whether SLC9B2 plays a role in osteoclast differentiation or not. The sequence is that of Sodium/hydrogen exchanger 9B2 (SLC9B2) from Bison bison bison (North American plains bison).